A 1946-amino-acid chain; its full sequence is Chromodomain-helicase-DNA-binding protein 5 (1946 aa).

3 disordered regions span residues 1–140, 236–272, and 285–340; these read MRGP…SGQL, VPQTLPIRKAKTKEGKGPGVRKKNKGAKDSKKKGRGK, and SKRK…GDGY. Composition is skewed to acidic residues over residues 17-37 and 72-90; these read EEMENEEEMSEEEDGGLEGFE and NDEMSDNEEDLEEKSESEG. Basic residues-rich tracts occupy residues 96-118 and 254-272; these read TKKKKKKLKEKKEKKEKKEKRKK and GVRKKNKGAKDSKKKGRGK. Positions 293–303 are enriched in acidic residues; sequence SEEDEREDSDL. A compositionally biased stretch (basic residues) spans 323–332; that stretch reads KKNKRRRKKK. 2 PHD-type zinc fingers span residues 345-392 and 418-465; these read QDYC…CEKE and MEFC…CTCP. Residues 345 to 655 are histone-binding; that stretch reads QDYCEVCQQG…HRELMLGEDA (311 aa). In terms of domain architecture, Chromo 1 spans 499-556; it reads MPPPRPLEGIPEREFFVKWAGLSYWHCSWVKELQLELYHTVMYRNYQRKNDMDEPPPF. The segment at 551-573 is disordered; that stretch reads DEPPPFDYGSGDEDGKSEKRKNK. The segment covering 563-573 has biased composition (basic and acidic residues); sequence EDGKSEKRKNK. The 62-residue stretch at 594–655 folds into the Chromo 2 domain; it reads MMVHRILNHS…HRELMLGEDA (62 aa). The Helicase ATP-binding domain occupies 714–898; the sequence is RFSWAQGTDT…FHLLNFLTPE (185 aa). 727 to 734 contacts ATP; the sequence is DEMGLGKT. A DEAH box motif is present at residues 849–852; it reads DEAH. In terms of domain architecture, Helicase C-terminal spans 1030–1195; the sequence is LLQKMLKKLR…MTKQELDDIL (166 aa). Disordered stretches follow at residues 1210–1254, 1353–1413, 1525–1566, 1579–1696, and 1926–1946; these read MMSQ…VEDS, YNDA…LPPL, KYST…APLG, DEKE…EDKN, and SFPAEPSHLPNPRGREKLQPF. The span at 1212–1230 shows a compositional bias: polar residues; it reads SQGQRPTTPIPDIQSTKGG. Composition is skewed to acidic residues over residues 1357-1368 and 1378-1387; these read SQEDQEWQDELS and SEDEDEDFEE. Residue glutamine 1392 is modified to N5-methylglutamine. Pro residues predominate over residues 1551–1564; that stretch reads TPVPASPAQLPPAP. Serine 1556 is modified (phosphoserine). 3 stretches are compositionally biased toward basic and acidic residues: residues 1602-1629, 1637-1654, and 1661-1676; these read DRVEGEDKHQSSDSKDRAREERTEEVEK, PLKEEVLPDKEPIPDKPE, and GDFRPDDPKTEEKEPG.

Belongs to the SNF2/RAD54 helicase family. As to quaternary structure, component of the nucleosome remodeling and deacetylase (NuRD) repressor complex, composed of core proteins MTA1, MTA2, MTA3, RBBP4, RBBP7, HDAC1, HDAC2, MBD2, MBD3, and peripherally associated proteins CDK2AP1, CDK2AP2, GATAD2A, GATAD2B, CHD3, CHD4 and CHD5. The exact stoichiometry of the NuRD complex is unknown, and some subunits such as MBD2 and MBD3, GATAD2A and GATAD2B, and CHD3, CHD4 and CHD5 define mutually exclusive NuRD complexes. Interacts with HDAC2. Post-translationally, methylated at Gln-1392 by N6AMT1. In terms of tissue distribution, specifically expressed by neurons in brain, retina and adrenal gland (at protein level). Also detected in testis.

It is found in the nucleus. It localises to the chromosome. The catalysed reaction is ATP + H2O = ADP + phosphate + H(+). Its function is as follows. ATP-dependent chromatin-remodeling factor that binds DNA through histones and regulates gene transcription. May specifically recognize and bind trimethylated 'Lys-27' (H3K27me3) and non-methylated 'Lys-4' of histone H3. Acts as a component of the histone deacetylase NuRD complex which participates in the remodeling of chromatin. Plays a role in the development of the nervous system by activating the expression of genes promoting neuron terminal differentiation. In parallel, it may also positively regulate the trimethylation of histone H3 at 'Lys-27' thereby specifically repressing genes that promote the differentiation into non-neuronal cell lineages. Regulates the expression of genes involved in cell proliferation and differentiation. Downstream activated genes may include CDKN2A that positively regulates the p53/TP53 pathway, which in turn, prevents cell proliferation. In spermatogenesis, it probably regulates histone hyperacetylation and the replacement of histones by transition proteins in chromatin, a crucial step in the condensation of spermatid chromatin and the production of functional spermatozoa. This is Chromodomain-helicase-DNA-binding protein 5 (Chd5) from Mus musculus (Mouse).